The chain runs to 246 residues: Small ribosomal subunit protein uS2 (246 aa).

This sequence belongs to the universal ribosomal protein uS2 family.

This Chromohalobacter salexigens (strain ATCC BAA-138 / DSM 3043 / CIP 106854 / NCIMB 13768 / 1H11) protein is Small ribosomal subunit protein uS2.